The primary structure comprises 464 residues: Kynureninase 2 (464 aa).

Pyridoxal 5'-phosphate contacts are provided by residues L135, T136, 163–166 (FPSD), D248, H251, and Y273. Residue K274 is modified to N6-(pyridoxal phosphate)lysine. Positions 313 and 341 each coordinate pyridoxal 5'-phosphate.

This sequence belongs to the kynureninase family. Homodimer. Pyridoxal 5'-phosphate is required as a cofactor.

The protein resides in the cytoplasm. It catalyses the reaction L-kynurenine + H2O = anthranilate + L-alanine + H(+). The catalysed reaction is 3-hydroxy-L-kynurenine + H2O = 3-hydroxyanthranilate + L-alanine + H(+). The protein operates within amino-acid degradation; L-kynurenine degradation; L-alanine and anthranilate from L-kynurenine: step 1/1. It participates in cofactor biosynthesis; NAD(+) biosynthesis; quinolinate from L-kynurenine: step 2/3. Catalyzes the cleavage of L-kynurenine (L-Kyn) and L-3-hydroxykynurenine (L-3OHKyn) into anthranilic acid (AA) and 3-hydroxyanthranilic acid (3-OHAA), respectively. The protein is Kynureninase 2 (bna5-2) of Aspergillus clavatus (strain ATCC 1007 / CBS 513.65 / DSM 816 / NCTC 3887 / NRRL 1 / QM 1276 / 107).